The primary structure comprises 310 residues: 2-phospho-L-lactate transferase (310 aa).

The 7,8-didemethyl-8-hydroxy-5-deazariboflavin site is built by Asp50 and Arg89.

It belongs to the CofD family. As to quaternary structure, homodimer. Requires Mg(2+) as cofactor.

The enzyme catalyses (2S)-lactyl-2-diphospho-5'-guanosine + 7,8-didemethyl-8-hydroxy-5-deazariboflavin = oxidized coenzyme F420-0 + GMP + H(+). Its pathway is cofactor biosynthesis; coenzyme F420 biosynthesis. In terms of biological role, catalyzes the transfer of the 2-phospholactate moiety from (2S)-lactyl-2-diphospho-5'-guanosine to 7,8-didemethyl-8-hydroxy-5-deazariboflavin (FO) with the formation of oxidized coenzyme F420-0 and GMP. This is 2-phospho-L-lactate transferase from Methanopyrus kandleri (strain AV19 / DSM 6324 / JCM 9639 / NBRC 100938).